The primary structure comprises 89 residues: Elongation factor 1-beta (89 aa).

Belongs to the EF-1-beta/EF-1-delta family.

Its function is as follows. Promotes the exchange of GDP for GTP in EF-1-alpha/GDP, thus allowing the regeneration of EF-1-alpha/GTP that could then be used to form the ternary complex EF-1-alpha/GTP/AAtRNA. In Methanocella arvoryzae (strain DSM 22066 / NBRC 105507 / MRE50), this protein is Elongation factor 1-beta.